The chain runs to 465 residues: Monocarboxylate transporter 4 (465 aa).

Residues 2–17 (GGAVVDEGPTGVKAPD) are Cytoplasmic-facing. Residues 18–38 (GGWGWAVLFGCFVITGFSYAF) traverse the membrane as a helical segment. Topologically, residues 39–61 (PKAVSVFFKELIQEFGIGYSDTA) are extracellular. A helical transmembrane segment spans residues 62 to 82 (WISSILLAMLYGTGPLCSVCV). Topologically, residues 83-84 (NR) are cytoplasmic. A helical membrane pass occupies residues 85–105 (FGCRPVMLVGGLFASLGMVAA). Residues 106–109 (SFCR) are Extracellular-facing. Residues 110 to 130 (SIIQVYLTTGVITGLGLALNF) form a helical membrane-spanning segment. The Cytoplasmic portion of the chain corresponds to 131–149 (QPSLIMLNRYFSKRRPMAN). A helical membrane pass occupies residues 150–170 (GLAAAGSPVFLCALSPLGQLL). At 171–179 (QDRYGWRGG) the chain is on the extracellular side. The chain crosses the membrane as a helical span at residues 180–200 (FLILGGLLLNCCVCAALMRPL). The Cytoplasmic portion of the chain corresponds to 201–227 (VVTAQPGSGPPRPSRRLLDLSVFRDRG). The helical transmembrane segment at 228 to 248 (FVLYAVAASVMVLGLFVPPVF) threads the bilayer. The Extracellular segment spans residues 249–264 (VVSYAKDLGVPDTKAA). A helical membrane pass occupies residues 265–285 (FLLTILGFIDIFARPAAGFVA). At 286–294 (GLGKVRPYS) the chain is on the cytoplasmic side. Residues 295–315 (VYLFSFSMFFNGLADLAGSTA) form a helical membrane-spanning segment. Topologically, residues 316-317 (GD) are extracellular. A helical transmembrane segment spans residues 318-338 (YGGLVVFCIFFGISYGMVGAL). Topologically, residues 339-351 (QFEVLMAIVGTHK) are cytoplasmic. A helical transmembrane segment spans residues 352 to 372 (FSSAIGLVLLMEAVAVLVGPP). The Extracellular segment spans residues 373–384 (SGGKLLDATHVY). The chain crosses the membrane as a helical span at residues 385–405 (MYVFILAGAEVLTSSLILLLG). Topologically, residues 406–465 (NFFCIRKKPKEPQPEVAAAEEEKLHKPPADSGVDLREVEHFLKAEPEKNGEVVHTPETSV) are cytoplasmic. The tract at residues 419–438 (PEVAAAEEEKLHKPPADSGV) is disordered. Basolateral sorting signal regions lie at residues 423-441 (AAEE…VDLR) and 441-465 (REVE…ETSV). Basic and acidic residues predominate over residues 425–438 (EEEKLHKPPADSGV). Phosphoserine is present on Ser-436. Residue Thr-460 is modified to Phosphothreonine. Ser-464 carries the phosphoserine modification.

The protein belongs to the major facilitator superfamily. Monocarboxylate porter (TC 2.A.1.13) family. Interacts with BSG; interaction mediates SLC16A3 targeting to the plasma membrane. Highly expressed in skeletal muscle.

It is found in the cell membrane. Its subcellular location is the basolateral cell membrane. The catalysed reaction is (S)-lactate(in) + H(+)(in) = (S)-lactate(out) + H(+)(out). It carries out the reaction pyruvate(out) + H(+)(out) = pyruvate(in) + H(+)(in). Proton-dependent transporter of monocarboxylates such as L-lactate and pyruvate. Plays a predominant role in L-lactate efflux from highly glycolytic cells. The sequence is that of Monocarboxylate transporter 4 (SLC16A3) from Homo sapiens (Human).